The primary structure comprises 248 residues: Isoprenyl transferase (248 aa).

Asp-23 is a catalytic residue. A Mg(2+)-binding site is contributed by Asp-23. Substrate contacts are provided by residues 24-27 (GNGR), Trp-28, Arg-36, His-40, and 68-70 (STE). Residue Asn-71 is the Proton acceptor of the active site. Substrate contacts are provided by residues Trp-72, Arg-74, Arg-185, and 191–193 (RIS). Glu-204 serves as a coordination point for Mg(2+).

It belongs to the UPP synthase family. In terms of assembly, homodimer. Mg(2+) is required as a cofactor.

Catalyzes the condensation of isopentenyl diphosphate (IPP) with allylic pyrophosphates generating different type of terpenoids. The protein is Isoprenyl transferase of Neisseria meningitidis serogroup A / serotype 4A (strain DSM 15465 / Z2491).